The primary structure comprises 431 residues: Histidinol dehydrogenase (431 aa).

Residues tyrosine 127, glutamine 189, and asparagine 212 each coordinate NAD(+). Substrate contacts are provided by serine 237, glutamine 259, and histidine 262. Positions 259 and 262 each coordinate Zn(2+). Catalysis depends on proton acceptor residues glutamate 326 and histidine 327. Positions 327, 360, 414, and 419 each coordinate substrate. Aspartate 360 is a Zn(2+) binding site. Zn(2+) is bound at residue histidine 419.

This sequence belongs to the histidinol dehydrogenase family. It depends on Zn(2+) as a cofactor.

The catalysed reaction is L-histidinol + 2 NAD(+) + H2O = L-histidine + 2 NADH + 3 H(+). Its pathway is amino-acid biosynthesis; L-histidine biosynthesis; L-histidine from 5-phospho-alpha-D-ribose 1-diphosphate: step 9/9. Its function is as follows. Catalyzes the sequential NAD-dependent oxidations of L-histidinol to L-histidinaldehyde and then to L-histidine. In Xylella fastidiosa (strain 9a5c), this protein is Histidinol dehydrogenase.